The chain runs to 565 residues: Zinc finger protein 143 (565 aa).

C2H2-type zinc fingers lie at residues Phe230–His254, Tyr260–His284, Tyr290–His314, Phe320–His344, Tyr350–His374, Tyr380–His404, and Tyr410–His433.

This sequence belongs to the GLI C2H2-type zinc-finger protein family.

It localises to the nucleus. Transcriptional activator. Activates the gene for selenocysteine tRNA (tRNAsec). Binds to the activator element (AE) motif of the selenocysteine tRNA gene promoter. This chain is Zinc finger protein 143 (znf143), found in Xenopus laevis (African clawed frog).